A 308-amino-acid chain; its full sequence is Energy-coupling factor transporter ATP-binding protein EcfA2 (308 aa).

The 261-residue stretch at 3 to 263 folds into the ABC transporter domain; sequence IEVKNISKVF…VDFLRENEME (261 aa). 40–47 is a binding site for ATP; that stretch reads GPTGSGKT.

The protein belongs to the ABC transporter superfamily. Energy-coupling factor EcfA family. Forms a stable energy-coupling factor (ECF) transporter complex composed of 2 membrane-embedded substrate-binding proteins (S component), 2 ATP-binding proteins (A component) and 2 transmembrane proteins (T component).

Its subcellular location is the cell membrane. Its function is as follows. ATP-binding (A) component of a common energy-coupling factor (ECF) ABC-transporter complex. Unlike classic ABC transporters this ECF transporter provides the energy necessary to transport a number of different substrates. The chain is Energy-coupling factor transporter ATP-binding protein EcfA2 from Mycoplasma mobile (strain ATCC 43663 / 163K / NCTC 11711) (Mesomycoplasma mobile).